Here is a 124-residue protein sequence, read N- to C-terminus: Small ribosomal subunit protein uS12 (124 aa).

Residue aspartate 89 is modified to 3-methylthioaspartic acid. The tract at residues threonine 104–lysine 124 is disordered. A compositionally biased stretch (basic residues) spans glutamine 112–lysine 124.

Belongs to the universal ribosomal protein uS12 family. Part of the 30S ribosomal subunit. Contacts proteins S8 and S17. May interact with IF1 in the 30S initiation complex.

Functionally, with S4 and S5 plays an important role in translational accuracy. In terms of biological role, interacts with and stabilizes bases of the 16S rRNA that are involved in tRNA selection in the A site and with the mRNA backbone. Located at the interface of the 30S and 50S subunits, it traverses the body of the 30S subunit contacting proteins on the other side and probably holding the rRNA structure together. The combined cluster of proteins S8, S12 and S17 appears to hold together the shoulder and platform of the 30S subunit. In Thermosipho melanesiensis (strain DSM 12029 / CIP 104789 / BI429), this protein is Small ribosomal subunit protein uS12.